Consider the following 463-residue polypeptide: MGKEKTHINIVVIGHVDSGKSTTTGHLIYKCGGIDKRTIEKFEKEAAEMGKGSFKYAWVLDKLKAERERGITIDISLWKFETTKYYITIIDAPGHRDFIKNMITGTSQADCAVLIVAAGVGEFEAGISKNGQTREHALLAYTLGVKQLIVGVNKMDSTEPAYSEKRYDEIVKEVSAYIKKIGYNPATVPFVPISGWHGDNMLEPSPNMPWFKGWKVERKEGNASGVSLLEALDTILPPTRPTDKPLRLPLQDVYKIGGIGTVPVGRVETGILRPGMVVTFAPVNITTEVKSVEMHHEALSEALPGDNVGFNVKNVSVKDIRRGNVCGDSKADPPQEAAQFTSQVIILNHPGQISAGYSPVIDCHTAHIACKFAELKEKIDRRSGKKLEDNPKSLKSGDAAIVEMVPGKPMCVESFSQYPPLGRFAVRDMRQTVAVGVIKNVEKKSGGAGKVTKSAQKAQKAGK.

Residue Gly2 is modified to N,N,N-trimethylglycine. The 238-residue stretch at 5 to 242 (KTHINIVVIG…DTILPPTRPT (238 aa)) folds into the tr-type G domain. A G1 region spans residues 14-21 (GHVDSGKS). Positions 17, 18, 19, 20, 21, and 22 each coordinate GTP. Mg(2+) is bound at residue Asp17. Lys36 bears the N6,N6,N6-trimethyllysine; alternate mark. An N6,N6-dimethyllysine; alternate modification is found at Lys36. An N6-methyllysine; alternate modification is found at Lys36. Lys55 is subject to N6,N6,N6-trimethyllysine. Lys55 is modified (N6,N6-dimethyllysine). The tract at residues 70–74 (GITID) is G2. At Lys79 the chain carries N6,N6,N6-trimethyllysine. The G3 stretch occupies residues 91-94 (DAPG). Residues Asn153, Lys154, and Asp156 each contribute to the GTP site. Positions 153–156 (NKMD) are G4. A Phosphoserine modification is found at Ser163. N6,N6-dimethyllysine; alternate is present on Lys165. Lys165 carries the post-translational modification N6-methyllysine; alternate. N6,N6,N6-trimethyllysine; alternate; by EEF1AKMT3 is present on Lys165. N6-acetyllysine is present on Lys179. Residues Ser194, Gly195, and Trp196 each contribute to the GTP site. The tract at residues 194 to 196 (SGW) is G5. A Phosphoserine modification is found at Ser224. The residue at position 239 (Thr239) is a Phosphothreonine. 5-glutamyl glycerylphosphorylethanolamine is present on residues Glu301 and Glu374. Residue Lys439 is modified to N6-acetyllysine. Positions 444–463 (KSGGAGKVTKSAQKAQKAGK) are disordered.

Belongs to the TRAFAC class translation factor GTPase superfamily. Classic translation factor GTPase family. EF-Tu/EF-1A subfamily. Homodimer; arranged in a 'head to tail' dimer configuration. In terms of processing, trimethylated at Lys-165 by EEF1AKMT3. Mono-, di-, and trimethylated at Lys-36 by EEF1AKMT4; trimethylated form is predominant. Methylation by EEF1AKMT4 contributes to the fine-tuning of translation rates for a subset of tRNAs. Trimethylated at the N-terminus and dimethylated at Lys-55 by METTL13.

The protein resides in the endoplasmic reticulum membrane. It carries out the reaction GTP + H2O = GDP + phosphate + H(+). Its function is as follows. Translation elongation factor that catalyzes the GTP-dependent binding of aminoacyl-tRNA (aa-tRNA) to the A-site of ribosomes during the elongation phase of protein synthesis. Base pairing between the mRNA codon and the aa-tRNA anticodon promotes GTP hydrolysis, releasing the aa-tRNA from EEF1A1 and allowing its accommodation into the ribosome. The growing protein chain is subsequently transferred from the P-site peptidyl tRNA to the A-site aa-tRNA, extending it by one amino acid through ribosome-catalyzed peptide bond formation. The polypeptide is Elongation factor 1-alpha 2 (Eef1a2) (Rattus norvegicus (Rat)).